The sequence spans 481 residues: 6-phosphogluconate dehydrogenase, decarboxylating (481 aa).

NADP(+) contacts are provided by residues 11–16, 34–36, 76–78, and Asn104; these read GLAVMG, NRT, and VKA. Residues Asn104 and 130-132 each bind substrate; that span reads SGG. Lys184 serves as the catalytic Proton acceptor. 187 to 188 serves as a coordination point for substrate; it reads HN. Glu191 serves as the catalytic Proton donor. The substrate site is built by Tyr192, Lys259, Arg286, Arg445, and His451.

It belongs to the 6-phosphogluconate dehydrogenase family. In terms of assembly, homodimer.

The enzyme catalyses 6-phospho-D-gluconate + NADP(+) = D-ribulose 5-phosphate + CO2 + NADPH. It participates in carbohydrate degradation; pentose phosphate pathway; D-ribulose 5-phosphate from D-glucose 6-phosphate (oxidative stage): step 3/3. Its function is as follows. Catalyzes the oxidative decarboxylation of 6-phosphogluconate to ribulose 5-phosphate and CO(2), with concomitant reduction of NADP to NADPH. The sequence is that of 6-phosphogluconate dehydrogenase, decarboxylating (Pgd) from Ceratitis capitata (Mediterranean fruit fly).